A 179-amino-acid chain; its full sequence is ATP synthase subunit delta (179 aa).

Belongs to the ATPase delta chain family. In terms of assembly, F-type ATPases have 2 components, F(1) - the catalytic core - and F(0) - the membrane proton channel. F(1) has five subunits: alpha(3), beta(3), gamma(1), delta(1), epsilon(1). F(0) has three main subunits: a(1), b(2) and c(10-14). The alpha and beta chains form an alternating ring which encloses part of the gamma chain. F(1) is attached to F(0) by a central stalk formed by the gamma and epsilon chains, while a peripheral stalk is formed by the delta and b chains.

Its subcellular location is the cell membrane. Functionally, f(1)F(0) ATP synthase produces ATP from ADP in the presence of a proton or sodium gradient. F-type ATPases consist of two structural domains, F(1) containing the extramembraneous catalytic core and F(0) containing the membrane proton channel, linked together by a central stalk and a peripheral stalk. During catalysis, ATP synthesis in the catalytic domain of F(1) is coupled via a rotary mechanism of the central stalk subunits to proton translocation. In terms of biological role, this protein is part of the stalk that links CF(0) to CF(1). It either transmits conformational changes from CF(0) to CF(1) or is implicated in proton conduction. The protein is ATP synthase subunit delta of Clostridium botulinum (strain Kyoto / Type A2).